Consider the following 1033-residue polypeptide: Calcium-transporting ATPase 12, plasma membrane-type (1033 aa).

N-acetylmethionine is present on Met1. The Cytoplasmic portion of the chain corresponds to 1–152 (MRDLKEYDYS…NTYHKPPPKG (152 aa)). Residues 25–36 (QRRWRFAYAAIY) form an interaction with calmodulin region. At Ser37 the chain carries Phosphoserine. A helical membrane pass occupies residues 153–173 (LLFFVYEAFKDLTILILLVCA). Topologically, residues 174 to 191 (IFSLGFGIKEHGIKEGWY) are lumenal. Residues 192–212 (EGGSIFVAVFLVIVVSALSNF) form a helical membrane-spanning segment. The Cytoplasmic portion of the chain corresponds to 213 to 341 (RQERQFDKLS…SERTPLQVRL (129 aa)). A helical membrane pass occupies residues 342–361 (DTLTSTIGKIGLTVAALVLV). The Lumenal portion of the chain corresponds to 362 to 397 (VLLVRYFTGNTEKEGKREYNGSKTPVDTVVNSVVRI). A helical membrane pass occupies residues 398 to 415 (VAAAVTIVVVAIPEGLPL). At 416-806 (AVTLTLAYSM…KWGRCVYNNI (391 aa)) the chain is on the cytoplasmic side. The active-site 4-aspartylphosphate intermediate is Asp453. 2 residues coordinate Mg(2+): Asp751 and Asp755. A helical membrane pass occupies residues 807–825 (QKFIQFQLTVNVAALVINF). The Lumenal segment spans residues 826–836 (IAAISAGEVPL). Residues 837–857 (TAVQLLWVNLIMDTLGALALA) traverse the membrane as a helical segment. Over 858 to 877 (TERPTNELLKRKPVGRTEAL) the chain is Cytoplasmic. The chain crosses the membrane as a helical span at residues 878–900 (ITNVMWRNLLVQSLYQIAVLLIL). Over 901–909 (QFKGMSIFS) the chain is Lumenal. A helical membrane pass occupies residues 910–930 (VRKEVKDTLIFNTFVLCQVFN). At 931 to 948 (EFNAREMEKKNVFKGLHR) the chain is on the cytoplasmic side. Residues 949–970 (NRLFIGIIAITIVLQVIMVEFL) form a helical membrane-spanning segment. Topologically, residues 971–980 (KKFADTVRLN) are lumenal. Residues 981-1002 (GWQWGTCIALASLSWPIGFFTK) traverse the membrane as a helical segment. The Cytoplasmic segment spans residues 1003 to 1006 (FIPV).

It belongs to the cation transport ATPase (P-type) (TC 3.A.3) family. Type IIB subfamily.

The protein localises to the membrane. The catalysed reaction is Ca(2+)(in) + ATP + H2O = Ca(2+)(out) + ADP + phosphate + H(+). Its activity is regulated as follows. Activated by calmodulin. In terms of biological role, this magnesium-dependent enzyme catalyzes the hydrolysis of ATP coupled with the translocation of calcium from the cytosol out of the cell or into organelles. This Arabidopsis thaliana (Mouse-ear cress) protein is Calcium-transporting ATPase 12, plasma membrane-type (ACA12).